The primary structure comprises 87 residues: MKTLLLSLVVVTIVCLDLGYTRTCLISPSSTPQTCPNGQDICFRKAQCDNFCHSRGPVIEQGCVATCPQFRSNYRSLLCCRTDNCNH.

The first 21 residues, 1–21 (MKTLLLSLVVVTIVCLDLGYT), serve as a signal peptide directing secretion. 5 disulfides stabilise this stretch: Cys-24-Cys-42, Cys-35-Cys-63, Cys-48-Cys-52, Cys-67-Cys-79, and Cys-80-Cys-85.

It belongs to the three-finger toxin family. Long-chain subfamily. Kappa-neurotoxin sub-subfamily. Homodimer and heterodimer with kappa 2-bungarotoxin; non-covalently-linked. As to expression, expressed by the venom gland.

It is found in the secreted. Postsynaptic neurotoxin that binds and inhibits neuronal nicotinic acetylcholine receptors (nAChR) with high affinity (IC(50)&lt;100 nM). Is a selective, and slowly reversible antagonist of alpha-3/CHRNA3-containing and some alpha-4/CHRNA4-containing AChRs. This Bungarus multicinctus (Many-banded krait) protein is Kappa-3-bungarotoxin.